We begin with the raw amino-acid sequence, 1246 residues long: Putative helicase L115 (1246 aa).

Positions 1-21 (MSKTITKKVNKKTKKSTKINP) are disordered. Residues 872–1030 (AKFTDGYHGF…YYMLKMLQTG (159 aa)) form the Helicase ATP-binding domain. An ATP-binding site is contributed by 885-892 (SDVGSGKT).

This Acanthamoeba polyphaga (Amoeba) protein is Putative helicase L115.